Consider the following 103-residue polypeptide: MITKDKIRVRLFSFDVKILDQSAESIVRAVQKSKAQIKGPIPLPTKIKKYTVLRSPHVNKKSREQFEMRTHKRLIDILEPTSALMDSLMKLELPAGVEVDIKQ.

Belongs to the universal ribosomal protein uS10 family. In terms of assembly, part of the 30S ribosomal subunit.

Functionally, involved in the binding of tRNA to the ribosomes. This Borrelia duttonii (strain Ly) protein is Small ribosomal subunit protein uS10.